A 346-amino-acid chain; its full sequence is Large ribosomal subunit protein uL1c (346 aa).

A chloroplast-targeting transit peptide spans 1–70 (MAACATHSSL…RASNHKFIVS (70 aa)). Tyr-129 bears the Phosphotyrosine mark. Thr-177 bears the Phosphothreonine mark. Phosphoserine is present on Ser-197.

The protein belongs to the universal ribosomal protein uL1 family. As to quaternary structure, part of the 50S ribosomal subunit.

It localises to the plastid. The protein localises to the chloroplast. In terms of biological role, this protein binds directly to 23S ribosomal RNA. This chain is Large ribosomal subunit protein uL1c (RPL1), found in Arabidopsis thaliana (Mouse-ear cress).